Reading from the N-terminus, the 394-residue chain is Trans-enoyl reductase fumoC (394 aa).

62 to 65 is a binding site for NADP(+); the sequence is VDGK. 152–159 provides a ligand contact to substrate; sequence ASLASVGM. NADP(+) contacts are provided by residues 224–227, Tyr-242, and 289–290; these read SSSS and LD. 309-313 serves as a coordination point for substrate; the sequence is TLTQF. 378-379 provides a ligand contact to NADP(+); it reads VK.

This sequence belongs to the zinc-containing alcohol dehydrogenase family. In terms of assembly, monomer.

It participates in secondary metabolite biosynthesis. Functionally, trans-enoyl reductase; part of the gene cluster that mediates the biosynthesis of fumosorinone, a 2-pyridone alkaloid that acts as an inhibitor of protein tyrosine phosphatase 1B which is implicated asa negative regulator of insulin receptor signaling and a potential drug target for the treatment of type II diabetes and other associated metabolic syndromes. The polyketide-amino acid backbone of fumosorinone is first assembled by the PKS-NRPS hybrid fumoS. The PKS modules condense one acetyl-CoA starter unit with 7 malonyl-CoA units, programmed C-methylations occurring after the first 3 and the sixth extensions, and cycles of full reduction occurring after the first 2 extensions. Because fumoS lacks a designated enoyl reductase (ER) domain, the required activity is provided the enoyl reductase fumoC. Upon formation of the polyketide backbone on the thiotemplate, the polyketide is transferred to the NRPS module and linked to tyrosine to produce the acyltetramic acid intermediate called prefumosorinone A. The cytochrome P450 monooxygenase fumoA then probably catalyzes an unprecedented oxidative ring expansion of prefumosorinone A to form prefumosorinone B which contains the 2-pyridone core of fumosorinone. The cytochrome P450 monooxygenase fumoB might hydroxylate the nitrogen of prefumosorinone B, but not the acyltetramic acid prefumosorinone A, to form fumosorinone. In Cordyceps fumosorosea (strain ARSEF 2679) (Isaria fumosorosea), this protein is Trans-enoyl reductase fumoC.